A 427-amino-acid polypeptide reads, in one-letter code: Serine hydroxymethyltransferase (427 aa).

(6S)-5,6,7,8-tetrahydrofolate contacts are provided by residues Leu124 and 128 to 130 (GHL). Position 233 is an N6-(pyridoxal phosphate)lysine (Lys233).

Belongs to the SHMT family. Homodimer. Pyridoxal 5'-phosphate is required as a cofactor.

Its subcellular location is the cytoplasm. The enzyme catalyses (6R)-5,10-methylene-5,6,7,8-tetrahydrofolate + glycine + H2O = (6S)-5,6,7,8-tetrahydrofolate + L-serine. It functions in the pathway one-carbon metabolism; tetrahydrofolate interconversion. It participates in amino-acid biosynthesis; glycine biosynthesis; glycine from L-serine: step 1/1. In terms of biological role, catalyzes the reversible interconversion of serine and glycine with tetrahydrofolate (THF) serving as the one-carbon carrier. This reaction serves as the major source of one-carbon groups required for the biosynthesis of purines, thymidylate, methionine, and other important biomolecules. Also exhibits THF-independent aldolase activity toward beta-hydroxyamino acids, producing glycine and aldehydes, via a retro-aldol mechanism. This Acidothermus cellulolyticus (strain ATCC 43068 / DSM 8971 / 11B) protein is Serine hydroxymethyltransferase.